A 227-amino-acid polypeptide reads, in one-letter code: MENLKKMAGIKAAEFVKDGMVVGLGTGSTAYYFVEEIGRRIKEEGLQIIAVTTSSVTTKQAEGLNIPLKSIDQVDFVDVTVDGADEVDSQFNGIKGGGGALLMEKVVATPSKEYIWVVDESKLVEKLGAFKLPVEVVQYGAEQVFRRFERAGYKPSFREKDGQRFVTDMQNFIIDLALDVIENPIAFGQELDHVVGVVEHGLFNQMVDKVIVAGRDGVQISTSKKGK.

Residues Thr26–Thr29, Asp82–Asp85, and Lys95–Gly98 contribute to the substrate site. Glu104 functions as the Proton acceptor in the catalytic mechanism. Lys122 serves as a coordination point for substrate.

The protein belongs to the ribose 5-phosphate isomerase family. As to quaternary structure, homodimer.

It carries out the reaction aldehydo-D-ribose 5-phosphate = D-ribulose 5-phosphate. It participates in carbohydrate degradation; pentose phosphate pathway; D-ribose 5-phosphate from D-ribulose 5-phosphate (non-oxidative stage): step 1/1. Functionally, catalyzes the reversible conversion of ribose-5-phosphate to ribulose 5-phosphate. The polypeptide is Ribose-5-phosphate isomerase A (Streptococcus pneumoniae (strain ATCC 700669 / Spain 23F-1)).